The primary structure comprises 267 residues: Octanoyltransferase (267 aa).

Residues 77-265 (GTASELVWLV…AFESVFGPRQ (189 aa)) form the BPL/LPL catalytic domain. Substrate is bound by residues 116 to 123 (RGGEYTYH), 196 to 198 (AIG), and 209 to 211 (GIA). Cys227 functions as the Acyl-thioester intermediate in the catalytic mechanism.

It belongs to the LipB family.

Its subcellular location is the cytoplasm. It catalyses the reaction octanoyl-[ACP] + L-lysyl-[protein] = N(6)-octanoyl-L-lysyl-[protein] + holo-[ACP] + H(+). It functions in the pathway protein modification; protein lipoylation via endogenous pathway; protein N(6)-(lipoyl)lysine from octanoyl-[acyl-carrier-protein]: step 1/2. In terms of biological role, catalyzes the transfer of endogenously produced octanoic acid from octanoyl-acyl-carrier-protein onto the lipoyl domains of lipoate-dependent enzymes. Lipoyl-ACP can also act as a substrate although octanoyl-ACP is likely to be the physiological substrate. This Brucella suis biovar 1 (strain 1330) protein is Octanoyltransferase.